The sequence spans 384 residues: 8-amino-7-oxononanoate synthase (384 aa).

Arginine 21 provides a ligand contact to substrate. 108–109 (GF) serves as a coordination point for pyridoxal 5'-phosphate. Histidine 133 contributes to the substrate binding site. Serine 179, histidine 207, and threonine 233 together coordinate pyridoxal 5'-phosphate. Lysine 236 is modified (N6-(pyridoxal phosphate)lysine). Threonine 352 is a binding site for substrate.

This sequence belongs to the class-II pyridoxal-phosphate-dependent aminotransferase family. BioF subfamily. As to quaternary structure, homodimer. The cofactor is pyridoxal 5'-phosphate.

The catalysed reaction is 6-carboxyhexanoyl-[ACP] + L-alanine + H(+) = (8S)-8-amino-7-oxononanoate + holo-[ACP] + CO2. It functions in the pathway cofactor biosynthesis; biotin biosynthesis. In terms of biological role, catalyzes the decarboxylative condensation of pimeloyl-[acyl-carrier protein] and L-alanine to produce 8-amino-7-oxononanoate (AON), [acyl-carrier protein], and carbon dioxide. The chain is 8-amino-7-oxononanoate synthase from Escherichia coli O9:H4 (strain HS).